Reading from the N-terminus, the 359-residue chain is Acyl-CoA Delta-9 desaturase (359 aa).

A run of 2 helical transmembrane segments spans residues 51–71 (VILF…AFTS) and 74–94 (IATT…ITGG). Fe cation contacts are provided by H96, H101, H133, H136, and H137. Positions 96–101 (HRLWAH) match the Histidine box-1 motif. Positions 133–137 (HRVHH) match the Histidine box-2 motif. The next 2 helical transmembrane spans lie at 194-214 (YLIL…VYMW) and 222-244 (WFVA…NSAA). Residues H245, H274, H277, and H278 each coordinate Fe cation. A Histidine box-3 motif is present at residues 274-278 (HNYHH).

The protein belongs to the fatty acid desaturase type 1 family. It depends on Fe(2+) as a cofactor.

Its subcellular location is the membrane. It catalyses the reaction octadecanoyl-CoA + 2 Fe(II)-[cytochrome b5] + O2 + 2 H(+) = (9Z)-octadecenoyl-CoA + 2 Fe(III)-[cytochrome b5] + 2 H2O. The enzyme catalyses hexadecanoyl-CoA + 2 Fe(II)-[cytochrome b5] + O2 + 2 H(+) = (9Z)-hexadecenoyl-CoA + 2 Fe(III)-[cytochrome b5] + 2 H2O. In terms of biological role, catalyzes the formation of a Delta9 double bond, acting on saturated fatty acyl substrates like palmitoyl-CoA (hexadecanoyl-CoA) and stearoyl-CoA (octadecanoyl-CoA) with higher desaturation activity on octadecanoyl-CoA than hexadecanoyl-CoA. This is Acyl-CoA Delta-9 desaturase from Acheta domesticus (House cricket).